A 474-amino-acid chain; its full sequence is Gamma-aminobutyric acid receptor subunit beta-1 (474 aa).

An N-terminal signal peptide occupies residues 1–25; it reads MWTVQNRESLGLLSFPVMIAMVCCA. The Extracellular portion of the chain corresponds to 26 to 245; the sequence is HSANEPSNMS…SFRLKRNIGY (220 aa). N-linked (GlcNAc...) asparagine glycosylation is found at N33 and N105. Position 122 (Y122) interacts with histamine. A disulfide bond links C161 and C175. N174 carries N-linked (GlcNAc...) asparagine glycosylation. Residues 181-182 and T227 contribute to the histamine site; that span reads SY. 4-aminobutanoate is bound by residues Y182 and T227. Helical transmembrane passes span 246–267, 271–293, and 305–327; these read FILQTYMPSTLITILSWVSFWI, ASAARVALGITTVLTMTTISTHL, and AIDIYLMGCFVFVFLALLEYAFV. Over 328-451 the chain is Cytoplasmic; the sequence is NYIFFGKGPQ…DLTDVNSIDK (124 aa). Residues 452 to 473 traverse the membrane as a helical segment; sequence WSRMFFPITFSLFNVVYWLYYV.

This sequence belongs to the ligand-gated ion channel (TC 1.A.9) family. Gamma-aminobutyric acid receptor (TC 1.A.9.5) subfamily. GABRB1 sub-subfamily. Heteropentamer, formed by a combination of alpha (GABRA1-6), beta (GABRB1-3), gamma (GABRG1-3), delta (GABRD), epsilon (GABRE), rho (GABRR1-3), pi (GABRP) and theta (GABRQ) chains, each subunit exhibiting distinct physiological and pharmacological properties. Binds UBQLN1.

It localises to the postsynaptic cell membrane. Its subcellular location is the cell membrane. It carries out the reaction chloride(in) = chloride(out). Potentiated by histamine. Functionally, beta subunit of the heteropentameric ligand-gated chloride channel gated by gamma-aminobutyric acid (GABA), a major inhibitory neurotransmitter in the brain. GABA-gated chloride channels, also named GABA(A) receptors (GABAAR), consist of five subunits arranged around a central pore and contain GABA active binding site(s) located at the alpha and beta subunit interface(s). When activated by GABA, GABAARs selectively allow the flow of chloride anions across the cell membrane down their electrochemical gradient. Chloride influx into the postsynaptic neuron following GABAAR opening decreases the neuron ability to generate a new action potential, thereby reducing nerve transmission. Beta-containing GABAARs can simultaneously bind GABA and histamine where histamine binds at the interface of two neighboring beta subunits, which may be involved in the regulation of sleep and wakefulness. This is Gamma-aminobutyric acid receptor subunit beta-1 (GABRB1) from Bos taurus (Bovine).